A 347-amino-acid chain; its full sequence is NADH-quinone oxidoreductase subunit H (347 aa).

A run of 9 helical transmembrane segments spans residues 13-33 (LIIA…VAYL), 50-70 (PNVV…KFVF), 82-102 (GVFL…WAVI), 115-135 (VGIL…IMGG), 161-181 (IGFV…TDIV), 198-218 (FLDW…ISAL), 248-268 (FLLF…LMTV), 286-306 (VPGI…FAMV), and 325-345 (VFLP…KVFG).

This sequence belongs to the complex I subunit 1 family. NDH-1 is composed of 14 different subunits. Subunits NuoA, H, J, K, L, M, N constitute the membrane sector of the complex.

It is found in the cell inner membrane. It catalyses the reaction a quinone + NADH + 5 H(+)(in) = a quinol + NAD(+) + 4 H(+)(out). NDH-1 shuttles electrons from NADH, via FMN and iron-sulfur (Fe-S) centers, to quinones in the respiratory chain. The immediate electron acceptor for the enzyme in this species is believed to be ubiquinone. Couples the redox reaction to proton translocation (for every two electrons transferred, four hydrogen ions are translocated across the cytoplasmic membrane), and thus conserves the redox energy in a proton gradient. This subunit may bind ubiquinone. This is NADH-quinone oxidoreductase subunit H from Brucella abortus (strain 2308).